Reading from the N-terminus, the 561-residue chain is Mercuric reductase (561 aa).

Positions 2–65 (THLKITGMTC…AVAGLGYKAT (64 aa)) constitute an HMA domain. Positions 11 and 14 each coordinate a metal cation. FAD contacts are provided by A110, G130, and T135. C136 and C141 form a disulfide bridge. Residues K145, A211, D403, and V411 each contribute to the FAD site. Hg(2+) is bound by residues C558 and C559.

Belongs to the class-I pyridine nucleotide-disulfide oxidoreductase family. Homodimer. Requires FAD as cofactor.

The enzyme catalyses Hg + NADP(+) + H(+) = Hg(2+) + NADPH. Resistance to Hg(2+) in bacteria appears to be governed by a specialized system which includes mercuric reductase. MerA protein is responsible for volatilizing mercury as Hg(0). Plays a pivotal role in mercury resistance under thiol-depleted conditions and cell protection. Protects cells under thiol-depleted conditions. This Pseudomonas aeruginosa protein is Mercuric reductase (merA).